A 347-amino-acid polypeptide reads, in one-letter code: DNA-directed RNA polymerase subunit alpha (347 aa).

The interval 1 to 230 (MFKGFQKPKR…DHMTIFINFE (230 aa)) is alpha N-terminal domain (alpha-NTD). Positions 247 to 347 (MNEVLNRSVE…EDDGQDQIGE (101 aa)) are alpha C-terminal domain (alpha-CTD). The disordered stretch occupies residues 320–347 (GRLVAPPPSAGGGPDFGPEDDGQDQIGE). Residues 336-347 (GPEDDGQDQIGE) are compositionally biased toward acidic residues.

Belongs to the RNA polymerase alpha chain family. In terms of assembly, homodimer. The RNAP catalytic core consists of 2 alpha, 1 beta, 1 beta' and 1 omega subunit. When a sigma factor is associated with the core the holoenzyme is formed, which can initiate transcription.

It catalyses the reaction RNA(n) + a ribonucleoside 5'-triphosphate = RNA(n+1) + diphosphate. Functionally, DNA-dependent RNA polymerase catalyzes the transcription of DNA into RNA using the four ribonucleoside triphosphates as substrates. In Solibacter usitatus (strain Ellin6076), this protein is DNA-directed RNA polymerase subunit alpha.